An 892-amino-acid polypeptide reads, in one-letter code: E3 ubiquitin ligase PQT3-like (892 aa).

In terms of domain architecture, DWNN spans 3–76 (IYYKFKSARD…NTSVLIRRVP (74 aa)). Residues 210 to 224 (CHRCNIPGHFIQHCP) form a CCHC-type zinc finger. S285 bears the Phosphoserine mark. Residues 295 to 333 (CPLCKEVMKDAALTSKCCYKSFCDKCIRDHIISKSMCVC) form an RING-type; degenerate zinc finger. 3 disordered regions span residues 375-408 (DLESARCPPPKALSPTTSVASKGEKKPVLSNNND), 459-493 (TQAPKEEMQQQVAAGEPGKKKKKKPRVPGNDMQWN), and 623-892 (MLRK…RSRA). At S404 the chain carries Phosphoserine. Residues 623–644 (MLRKRENERRPEGGKMFRDGEN) show a composition bias toward basic and acidic residues. The segment covering 647-666 (MMMNNGTSASASSINPNKSR) has biased composition (polar residues). Positions 674–692 (HDYDRRRRPEKRLSPEHPP) are enriched in basic and acidic residues. A Nuclear localization signal motif is present at residues 693 to 700 (TRKNISPS). The segment covering 708 to 745 (ERYPDERDRQRDRERSRHQDVDREHDRTRDRRDEDRSR) has biased composition (basic and acidic residues). Over residues 810–832 (SSSSTSVTDPSASASAAAAVGTS) the composition is skewed to low complexity. Phosphoserine is present on S866. Basic and acidic residues predominate over residues 875–892 (SEDKLRYSKRGKGERSRA).

The protein localises to the nucleus. It catalyses the reaction S-ubiquitinyl-[E2 ubiquitin-conjugating enzyme]-L-cysteine + [acceptor protein]-L-lysine = [E2 ubiquitin-conjugating enzyme]-L-cysteine + N(6)-ubiquitinyl-[acceptor protein]-L-lysine.. The protein is E3 ubiquitin ligase PQT3-like of Arabidopsis thaliana (Mouse-ear cress).